The following is a 219-amino-acid chain: ATP-dependent dethiobiotin synthetase BioD (219 aa).

14–19 contacts ATP; sequence DVGKTY. Residue Thr18 participates in Mg(2+) binding. Lys37 is a catalytic residue. Residue Ser41 coordinates substrate. Residues Asp54, 114-117, and 175-176 contribute to the ATP site; these read EGAG and NN. Mg(2+) is bound by residues Asp54 and Glu114.

Belongs to the dethiobiotin synthetase family. As to quaternary structure, homodimer. Mg(2+) serves as cofactor.

Its subcellular location is the cytoplasm. It carries out the reaction (7R,8S)-7,8-diammoniononanoate + CO2 + ATP = (4R,5S)-dethiobiotin + ADP + phosphate + 3 H(+). It functions in the pathway cofactor biosynthesis; biotin biosynthesis; biotin from 7,8-diaminononanoate: step 1/2. Its function is as follows. Catalyzes a mechanistically unusual reaction, the ATP-dependent insertion of CO2 between the N7 and N8 nitrogen atoms of 7,8-diaminopelargonic acid (DAPA, also called 7,8-diammoniononanoate) to form a ureido ring. This Fusobacterium nucleatum subsp. nucleatum (strain ATCC 25586 / DSM 15643 / BCRC 10681 / CIP 101130 / JCM 8532 / KCTC 2640 / LMG 13131 / VPI 4355) protein is ATP-dependent dethiobiotin synthetase BioD.